Here is a 144-residue protein sequence, read N- to C-terminus: Large ribosomal subunit protein uL15 (144 aa).

A disordered region spans residues 1 to 48; it reads MIKLESLQDPSPRKRRTKLLGRGPSSGHGKTSCRGHKGDGSRSGYKRR.

The protein belongs to the universal ribosomal protein uL15 family. As to quaternary structure, part of the 50S ribosomal subunit.

Its function is as follows. Binds to the 23S rRNA. The sequence is that of Large ribosomal subunit protein uL15 from Chlamydia caviae (strain ATCC VR-813 / DSM 19441 / 03DC25 / GPIC) (Chlamydophila caviae).